A 106-amino-acid polypeptide reads, in one-letter code: UPF0091 protein RP266 (106 aa).

The protein belongs to the UPF0091 family.

This chain is UPF0091 protein RP266, found in Rickettsia prowazekii (strain Madrid E).